A 428-amino-acid chain; its full sequence is Protein CLP1 homolog (428 aa).

ATP is bound by residues Glu-22, Lys-63, and Asp-127–Thr-132.

Belongs to the Clp1 family. Clp1 subfamily.

The protein resides in the nucleus. Its function is as follows. Required for endonucleolytic cleavage during polyadenylation-dependent pre-mRNA 3'-end formation. The chain is Protein CLP1 homolog from Nematostella vectensis (Starlet sea anemone).